Consider the following 266-residue polypeptide: Trehalose-6-phosphate phosphatase (266 aa).

Asp-20 serves as the catalytic Nucleophile. Residues Asp-20, Asp-22, and Asp-198 each contribute to the Mg(2+) site. 20–22 (DLD) provides a ligand contact to substrate.

The protein belongs to the trehalose phosphatase family. It depends on Mg(2+) as a cofactor. Mn(2+) serves as cofactor. Co(2+) is required as a cofactor. Requires Zn(2+) as cofactor.

The enzyme catalyses alpha,alpha-trehalose 6-phosphate + H2O = alpha,alpha-trehalose + phosphate. It participates in glycan biosynthesis; trehalose biosynthesis. In terms of biological role, removes the phosphate from trehalose 6-phosphate (Tre6P) to produce free trehalose. Also catalyzes the dephosphorylation of glucose-6-phosphate (Glu6P) and 2-deoxyglucose-6-phosphate (2dGlu6P). In Escherichia coli (strain K12), this protein is Trehalose-6-phosphate phosphatase (otsB).